The primary structure comprises 323 residues: MEETEEELRPCKICGRTFFPATLKKHVPICQKTSVKKRKTFESSRQRAEGTDINTVKPVKPRPEPPKKQSNWKRKHEEFIATIRSAKGISQILKEGGELPPPPPPSYDPDYVQCPYCQRRFNQNAADRHINFCKEQSARMGQKIKGGTDPKRKPTVRPQYKPPSLKTDSPAAVSSPASRLPQPPNFGKPTSGIPSGKSVANSGAPGNKYQTQSPAHKNSTMVTSPQAGGALKARTPPSLVKNPSSGTSFNKRKTYNAENNARPEAAMGYDSSDYSKPLNDGHIRAADNNMSGQLTKFCHECGTKYPVEWAKFCCECGVRRMVL.

The C2HC/C3H-type 1 zinc finger occupies 7–36; sequence ELRPCKICGRTFFPATLKKHVPICQKTSVK. Zn(2+) contacts are provided by Cys11, Cys14, His26, and Cys30. Residues 35–75 are disordered; that stretch reads VKKRKTFESSRQRAEGTDINTVKPVKPRPEPPKKQSNWKRK. Basic and acidic residues predominate over residues 40–50; the sequence is TFESSRQRAEG. The C2HC/C3H-type 2 zinc-finger motif lies at 110–139; that stretch reads DYVQCPYCQRRFNQNAADRHINFCKEQSAR. Positions 114, 117, 129, and 133 each coordinate Zn(2+). Residues 138 to 273 form a disordered region; it reads ARMGQKIKGG…EAAMGYDSSD (136 aa). Positions 208–226 are enriched in polar residues; that stretch reads KYQTQSPAHKNSTMVTSPQ.

Belongs to the ZC2HC1 family. The cofactor is Zn(2+).

The chain is Zinc finger C2HC domain-containing protein 1A (zc2hc1a) from Xenopus laevis (African clawed frog).